The chain runs to 613 residues: 9-cis-epoxycarotenoid dioxygenase NCED5, chloroplastic (613 aa).

The segment covering 1 to 15 (MPTTFTPNSPASSCS) has biased composition (polar residues). A chloroplast-targeting transit peptide spans 1–36 (MPTTFTPNSPASSCSIHHRASPSRGARNSVRFTRPR). Residues 1–62 (MPTTFTPNSP…PPAYVPPPPP (62 aa)) form a disordered region. Low complexity predominate over residues 37–50 (AAAAATNSVLSAPS). Pro residues predominate over residues 51–62 (SVPPAYVPPPPP). Residues His-305, His-354, His-419, and His-600 each coordinate Fe cation.

This sequence belongs to the carotenoid oxygenase family. Requires Fe(2+) as cofactor.

Its subcellular location is the plastid. It localises to the chloroplast. The catalysed reaction is a 9-cis-epoxycarotenoid + O2 = a 12'-apo-carotenal + 2-cis,4-trans-xanthoxin. It catalyses the reaction 9-cis-violaxanthin + O2 = (3S,5R,6S)-5,6-epoxy-3-hydroxy-5,6-dihydro-12'-apo-beta-caroten-12'-al + 2-cis,4-trans-xanthoxin. The enzyme catalyses 9'-cis-neoxanthin + O2 = (3S,5R,6R)-3,5-dihydroxy-6,7-didehydro-5,6-dihydro-12'-apo-beta-caroten-12'-al + 2-cis,4-trans-xanthoxin. In terms of biological role, has a 11,12(11',12') 9-cis epoxycarotenoid cleavage activity. Catalyzes the first step of abscisic-acid biosynthesis from carotenoids. The sequence is that of 9-cis-epoxycarotenoid dioxygenase NCED5, chloroplastic from Oryza sativa subsp. japonica (Rice).